We begin with the raw amino-acid sequence, 144 residues long: Large ribosomal subunit protein uL14 (144 aa).

Belongs to the universal ribosomal protein uL14 family. Part of the 50S ribosomal subunit. Forms a cluster with proteins L3 and L24e, part of which may contact the 16S rRNA in 2 intersubunit bridges.

Functionally, binds to 23S rRNA. Forms part of two intersubunit bridges in the 70S ribosome. This is Large ribosomal subunit protein uL14 from Cenarchaeum symbiosum (strain A).